We begin with the raw amino-acid sequence, 107 residues long: MSELAEKECVPCKGGVPPLKGEELERLARQLPGWEVVDEHHLRRSFRFRNFREALDFVNRVGELAEEQNHHPDICFGWGRAEITVFTHKIDGLTESDFVFAAKVDRL.

This sequence belongs to the pterin-4-alpha-carbinolamine dehydratase family.

It catalyses the reaction (4aS,6R)-4a-hydroxy-L-erythro-5,6,7,8-tetrahydrobiopterin = (6R)-L-erythro-6,7-dihydrobiopterin + H2O. The protein is Putative pterin-4-alpha-carbinolamine dehydratase of Rubrobacter xylanophilus (strain DSM 9941 / JCM 11954 / NBRC 16129 / PRD-1).